We begin with the raw amino-acid sequence, 437 residues long: Transcription factor AP-2-alpha (437 aa).

A Glycyl lysine isopeptide (Lys-Gly) (interchain with G-Cter in SUMO); alternate cross-link involves residue Lys10. Lys10 is covalently cross-linked (Glycyl lysine isopeptide (Lys-Gly) (interchain with G-Cter in SUMO2); alternate). Residues Cys14 to Leu107 form a disordered region. The short motif at Tyr57–Tyr62 is the PPxY motif element. Composition is skewed to low complexity over residues Ile65 to Ser74 and Gln88 to Gln101. Residues Lys177 and Lys184 each participate in a glycyl lysine isopeptide (Lys-Gly) (interchain with G-Cter in SUMO2) cross-link. Ser239 carries the post-translational modification Phosphoserine; by PKA. Positions Arg280–Asp410 are H-S-H (helix-span-helix), dimerization. Polar residues predominate over residues Leu414–Lys427. A disordered region spans residues Leu414–Lys437. Basic and acidic residues predominate over residues Ser428–Lys437.

It belongs to the AP-2 family. In terms of assembly, binds DNA as a dimer. Can form homodimers or heterodimers with other AP-2 family members. Interacts with WWOX. Interacts with CITED4. Interacts with UBE2I. Interacts with RALBP1 in a complex also containing EPN1 and NUMB during interphase and mitosis. Interacts with KCTD1; this interaction represses transcription activation. Interacts (via C-terminus) with CITED2 (via C-terminus); the interaction stimulates TFAP2A-transcriptional activation. Interacts (via N-terminus) with EP300 (via N-terminus); the interaction requires CITED2. Interacts with KCTD15; this interaction inhibits TFAP2A transcriptional activation. Post-translationally, sumoylated on Lys-10; which inhibits transcriptional activity.

Its subcellular location is the nucleus. Sequence-specific DNA-binding protein that interacts with inducible viral and cellular enhancer elements to regulate transcription of selected genes. AP-2 factors bind to the consensus sequence 5'-GCCNNNGGC-3' and activate genes involved in a large spectrum of important biological functions including proper eye, face, body wall, limb and neural tube development. They also suppress a number of genes including MCAM/MUC18, C/EBP alpha and MYC. AP-2-alpha is the only AP-2 protein required for early morphogenesis of the lens vesicle. Together with the CITED2 coactivator, stimulates the PITX2 P1 promoter transcription activation. Associates with chromatin to the PITX2 P1 promoter region. This chain is Transcription factor AP-2-alpha (TFAP2A), found in Homo sapiens (Human).